Consider the following 394-residue polypeptide: Ceramide glucosyltransferase (394 aa).

The Lumenal segment spans residues 1 to 10 (MALLDLAQEG). Residues 11–32 (MALFGFVLFVVLWLMHFMSIIY) traverse the membrane as a helical segment. At 33-195 (TRLHLNKKAT…QVYFGTSHPR (163 aa)) the chain is on the cytoplasmic side. A short sequence motif (D1) is located at residue Asp-92. N6-acetyllysine is present on Lys-117. Asp-144 is a short sequence motif (D2). The helical transmembrane segment at 196-215 (SYISANVTGFKCVTGMSCLM) threads the bilayer. Residues 216–287 (RKDVLDQAGG…KLRINMLPAT (72 aa)) lie on the Lumenal side of the membrane. Asp-236 is a short sequence motif (D3). The active-site Proton acceptor is Asp-236. A (Q/R)XXRW motif is present at residues 272-276 (RMIRW). Residues 288–304 (IICEPISECFVASLIIG) form a helical membrane-spanning segment. The Cytoplasmic portion of the chain corresponds to 305-309 (WAAHH). The helical transmembrane segment at 310–328 (VFRWDIMVFFMCHCLAWFI) threads the bilayer. Residues 329–348 (FDYIQLRGVQGGTLCFSKLD) lie on the Lumenal side of the membrane. The helical transmembrane segment at 349-369 (YAVAWFIRESMTIYIFLSALW) threads the bilayer. Over 370–394 (DPTISWRTGRYRLRCGGTAEEILDV) the chain is Cytoplasmic.

Belongs to the glycosyltransferase 2 family. As to quaternary structure, interacts with RTN1; regulates the ceramide glucosyltransferase activity of UGCG.

Its subcellular location is the golgi apparatus membrane. It catalyses the reaction an N-acylsphing-4-enine + UDP-alpha-D-glucose = a beta-D-glucosyl-(1&lt;-&gt;1')-N-acylsphing-4-enine + UDP + H(+). The catalysed reaction is UDP-alpha-D-xylose + an N-acylsphing-4-enine = a beta-D-xylosyl-(1&lt;-&gt;1')-N-acylsphing-4-enine + UDP + H(+). It carries out the reaction N-(9Z-octadecenoyl)-sphing-4-enine + UDP-alpha-D-xylose = beta-D-xylosyl-(1&lt;-&gt;1')-N-(9Z-octadecenoyl)-sphing-4-enine + UDP + H(+). It participates in lipid metabolism; sphingolipid metabolism. Participates in the initial step of the glucosylceramide-based glycosphingolipid/GSL synthetic pathway at the cytosolic surface of the Golgi. Catalyzes the transfer of glucose from UDP-glucose to ceramide to produce glucosylceramide/GlcCer (such as beta-D-glucosyl-(1&lt;-&gt;1')-N-acylsphing-4-enine). Glucosylceramide is the core component of glycosphingolipids/GSLs, amphipathic molecules consisting of a ceramide lipid moiety embedded in the outer leaflet of the membrane, linked to one of hundreds of different externally oriented oligosaccharide structures. Glycosphingolipids are essential components of membrane microdomains that mediate membrane trafficking and signal transduction. They are implicated in many fundamental cellular processes, including growth, differentiation, migration, morphogenesis, cell-to-cell and cell-to-matrix interactions. They are required for instance in the proper development and functioning of the nervous system. As an example of their role in signal transduction, they regulate the leptin receptor/LEPR in the leptin-mediated signaling pathway. They also play an important role in the establishment of the skin barrier regulating keratinocyte differentiation and the proper assembly of the cornified envelope. The biosynthesis of GSLs is also required for the proper intestinal endocytic uptake of nutritional lipids. Catalyzes the synthesis of xylosylceramide/XylCer (such as beta-D-xylosyl-(1&lt;-&gt;1')-N-acylsphing-4-enine) using UDP-Xyl as xylose donor. This is Ceramide glucosyltransferase from Mus musculus (Mouse).